Here is a 130-residue protein sequence, read N- to C-terminus: Small ribosomal subunit protein uS9 (130 aa).

The protein belongs to the universal ribosomal protein uS9 family.

This is Small ribosomal subunit protein uS9 from Geobacillus thermodenitrificans (strain NG80-2).